The following is a 224-amino-acid chain: 7-cyano-7-deazaguanine synthase (224 aa).

12–22 (LSGGLDSSTVT) contributes to the ATP binding site. Cysteine 193, cysteine 201, cysteine 204, and cysteine 207 together coordinate Zn(2+).

It belongs to the QueC family. It depends on Zn(2+) as a cofactor.

The enzyme catalyses 7-carboxy-7-deazaguanine + NH4(+) + ATP = 7-cyano-7-deazaguanine + ADP + phosphate + H2O + H(+). Its pathway is purine metabolism; 7-cyano-7-deazaguanine biosynthesis. Functionally, catalyzes the ATP-dependent conversion of 7-carboxy-7-deazaguanine (CDG) to 7-cyano-7-deazaguanine (preQ(0)). This is 7-cyano-7-deazaguanine synthase from Prochlorococcus marinus (strain AS9601).